The following is a 591-amino-acid chain: MNQGKIITVSGPLVVASGMQEANIQDICRVGHLGLVGEIIEMRRDQASIQVYEETSGIGPGEPVVTTGCPLSVELGPGLISEMFDGIQRPLDRFQKATDSDFLIRGVAIPSLDRKAKWAFIPKLSVGQEVVAGDILGTVQETAVIEHRIMVPYKVSGTLVAIHAGDFTVTDTVYEIKQEDGSIYQGSLMQTWPVRQSRPVAQKLIPVEPLVTGQRVIDTFFPVTKGGAAAVPGPFGAGKTVVQHQIAKFANVDIVIYVGCGERGNEMTDVLNEFPELIDPNTGQSIMERTVLIANTSNMPVAAREASIYTGITIAEYFRDMGYSVAIMADSTSRWAEALREMSGRLQEMPGDEGYPAYLGSRIAEYYERSGRVRTLGSQEREGTITAIGAVSPPGGDISEPVTQNTLRIVKVFWGLDAPLAQRRHFPAINWLTSYSLYQDDVGSYIDRKQQSNWSNKVTRAMAILQREASLEEIVRLVGLDSLSEQDRLTMAVARQIREDYLQQNAFDSVDTFTSFPKQEAMLTNILTFNEEASKALSLGAYFNEIMEGTAQVRDRIARSKFIPEENLEQIKGLTQKVTKEIHHVLAKGGI.

233 to 240 (GPFGAGKT) is a binding site for ATP.

The protein belongs to the ATPase alpha/beta chains family.

It catalyses the reaction ATP + H2O + 4 H(+)(in) = ADP + phosphate + 5 H(+)(out). Functionally, produces ATP from ADP in the presence of a proton gradient across the membrane. The V-type alpha chain is a catalytic subunit. This Streptococcus pyogenes serotype M18 (strain MGAS8232) protein is V-type ATP synthase alpha chain.